We begin with the raw amino-acid sequence, 734 residues long: Meiotic driver SPOK1 (734 aa).

Residues 4-41 adopt a coiled-coil conformation; it reads KDRIAQLLRELEEAKARVEEAKAREAQERCEKERLQLE. Disordered regions lie at residues 180-222 and 414-499; these read ELTQ…ICSN and LSSA…MADP. Positions 416-429 are enriched in polar residues; sequence SAPSSQNTDISEYT. A compositionally biased stretch (basic and acidic residues) spans 457–468; sequence NEHDEHDEDHSE.

It is found in the cytoplasm. It localises to the nucleus. Promotes unequal transmission of alleles from the parental zygote to progeny spores by acting as poison/antidote system, leading to poisoning of progeny that do not inherit the allele. May possess DNA nuclease activity that leads to spore killing, and a kinase activity that confers resistance to the nuclease activity. Can suppress meiotic drive by the P.anserina SPOK2, SPOK3 and SPOK4 proteins. The chain is Meiotic driver SPOK1 from Podospora comata.